Reading from the N-terminus, the 516-residue chain is Endoglucanase 17 (516 aa).

The N-terminal stretch at 1 to 29 is a signal peptide; that stretch reads MALLLVSSSSSYALRVTIFLSFFFFLCNG. The Nucleophile role is filled by Asp105. Residues His433, Asp484, and Glu493 contribute to the active site.

This sequence belongs to the glycosyl hydrolase 9 (cellulase E) family.

The protein localises to the secreted. It carries out the reaction Endohydrolysis of (1-&gt;4)-beta-D-glucosidic linkages in cellulose, lichenin and cereal beta-D-glucans.. The protein is Endoglucanase 17 of Arabidopsis thaliana (Mouse-ear cress).